The primary structure comprises 488 residues: Ankyrin repeat domain-containing protein 13C (488 aa).

Positions 1 to 60 (MTGEKIRSVRKERKSGLDLLEPDEEPAATGPAKHRGSKIFSGGNHRISRSSSSPGDPDGA) are disordered. Residues 41 to 59 (SGGNHRISRSSSSPGDPDG) show a composition bias toward low complexity. ANK repeat units follow at residues 58-87 (DGAY…IAQK), 90-119 (HGNT…PVKV), and 123-152 (QGWS…QQSR).

Its subcellular location is the endoplasmic reticulum membrane. Its function is as follows. Acts as a molecular chaperone for G protein-coupled receptors, regulating their biogenesis and exit from the ER. The sequence is that of Ankyrin repeat domain-containing protein 13C (ankrd13c) from Danio rerio (Zebrafish).